The sequence spans 603 residues: Matrix metalloproteinase-17 (603 aa).

The signal sequence occupies residues 1 to 35 (MRRRAARGPGPPPPGPGLSRLPLPLLLLLALGTRG). Positions 36–125 (GCAAPAPAPR…PVLTQARRRR (90 aa)) are excised as a propeptide. Residues 108 to 115 (PRCSLPDL) carry the Cysteine switch motif. Zn(2+) is bound at residue Cys110. Asn137 carries N-linked (GlcNAc...) asparagine glycosylation. His248 provides a ligand contact to Zn(2+). Glu249 is an active-site residue. Positions 252 and 258 each coordinate Zn(2+). The disordered stretch occupies residues 301-329 (SPTAQPEEPPLLPEPPDNRSSAPPRKDVP). Residue Asn318 is glycosylated (N-linked (GlcNAc...) asparagine). A disulfide bridge links Cys332 with Cys523. 4 Hemopexin repeats span residues 333–378 (STHF…WRGL), 382–427 (LDSV…FSLP), 428–475 (PGGI…WRGV), and 476–523 (PSTL…WLVC). The interval 537-571 (DAAEGPRAPPGQHDQSRSEDGYEVCSCTSGASSPP) is disordered. The GPI-anchor amidated serine moiety is linked to residue Ser565. Positions 566–603 (GASSPPGAPGPLVAATMLLLLPPLSPGALWTAAQALTL) are cleaved as a propeptide — removed in mature form.

The protein belongs to the peptidase M10A family. Zn(2+) serves as cofactor. It depends on Ca(2+) as a cofactor. Post-translationally, the precursor is cleaved by a furin endopeptidase. As to expression, expressed in brain, leukocytes, colon, ovary testis and breast cancer. Expressed also in many transformed and non-transformed cell types.

The protein localises to the cell membrane. It is found in the secreted. The protein resides in the extracellular space. It localises to the extracellular matrix. In terms of biological role, endopeptidase that degrades various components of the extracellular matrix, such as fibrin. May be involved in the activation of membrane-bound precursors of growth factors or inflammatory mediators, such as tumor necrosis factor-alpha. May also be involved in tumoral process. Cleaves pro-TNF-alpha at the '74-Ala-|-Gln-75' site. Not obvious if able to proteolytically activate progelatinase A. Does not hydrolyze collagen types I, II, III, IV and V, gelatin, fibronectin, laminin, decorin nor alpha1-antitrypsin. In Homo sapiens (Human), this protein is Matrix metalloproteinase-17 (MMP17).